Reading from the N-terminus, the 231-residue chain is Insertion sequence IS1162 putative ATP-binding protein (231 aa).

107–114 (GPTGVGKT) provides a ligand contact to ATP.

This sequence belongs to the IS21/IS1162 putative ATP-binding protein family.

The chain is Insertion sequence IS1162 putative ATP-binding protein from Pseudomonas fluorescens.